We begin with the raw amino-acid sequence, 59 residues long: Large ribosomal subunit protein bL32 (59 aa).

This sequence belongs to the bacterial ribosomal protein bL32 family.

In Synechococcus sp. (strain JA-2-3B'a(2-13)) (Cyanobacteria bacterium Yellowstone B-Prime), this protein is Large ribosomal subunit protein bL32.